The chain runs to 175 residues: Large ribosomal subunit protein uL6 (175 aa).

This sequence belongs to the universal ribosomal protein uL6 family. In terms of assembly, part of the 50S ribosomal subunit.

Its function is as follows. This protein binds to the 23S rRNA, and is important in its secondary structure. It is located near the subunit interface in the base of the L7/L12 stalk, and near the tRNA binding site of the peptidyltransferase center. This is Large ribosomal subunit protein uL6 from Xanthomonas campestris pv. campestris (strain 8004).